Reading from the N-terminus, the 61-residue chain is Inner membrane protein p12 (61 aa).

The chain crosses the membrane as a helical span at residues 16-36 (LLIVAIIVVIMAIMLYYFWWM).

Belongs to the asfivirus inner membrane protein p12 family. Homomultimer; disulfide-linked. Not glycosylated.

The protein localises to the virion membrane. The polypeptide is Inner membrane protein p12 (Ornithodoros (relapsing fever ticks)).